We begin with the raw amino-acid sequence, 121 residues long: uncharacterized protein (121 aa).

This sequence to M.jannaschii MJ0989.

This is an uncharacterized protein from Methanopyrus kandleri (strain AV19 / DSM 6324 / JCM 9639 / NBRC 100938).